The chain runs to 276 residues: MIVRFLCWLTGLLLCTAAYALPQRVISLAPHATEMAYAAGMGEQLIAVSAWSDYPPEAKKLEQVASWQGINLERILALKPDLILAWREGNPQRPLEQLANFSIPIVYLDAKTLDDIPASLRQLATYSRHPEQAERAATDFQQEIGRLRHTGEGQNAASLRVFIQFGTQPLFTSSQATLQSQIVSLCGAENIFSDSPVPWPQVSREQVLRRQPQAIIIGGSPDKIASVQTFWQPQLAVPVITVNEDWFSRSGPRLLLAAQQICSQLTALSPGSSSAK.

Positions 1–20 (MIVRFLCWLTGLLLCTAAYA) are cleaved as a signal peptide. The Fe/B12 periplasmic-binding domain occupies 24–273 (RVISLAPHAT…QLTALSPGSS (250 aa)). A disulfide bridge connects residues cysteine 186 and cysteine 262.

This sequence belongs to the BtuF family. The complex is composed of two ATP-binding proteins (BtuD), two transmembrane proteins (BtuC) and a solute-binding protein (BtuF).

It localises to the periplasm. Part of the ABC transporter complex BtuCDF involved in vitamin B12 import. Binds vitamin B12 and delivers it to the periplasmic surface of BtuC. The protein is Vitamin B12-binding protein of Pectobacterium carotovorum subsp. carotovorum (strain PC1).